The following is a 345-amino-acid chain: tRNA pseudouridine synthase B (345 aa).

The tract at residues 1–33 (MGGNSQPHQEPRRVNNDPRAKQQKGNQVRRDRR) is disordered. The segment covering 9–20 (QEPRRVNNDPRA) has biased composition (basic and acidic residues). Residue aspartate 72 is the Nucleophile of the active site.

The protein belongs to the pseudouridine synthase TruB family. Type 1 subfamily.

The catalysed reaction is uridine(55) in tRNA = pseudouridine(55) in tRNA. Functionally, responsible for synthesis of pseudouridine from uracil-55 in the psi GC loop of transfer RNAs. In Bradyrhizobium diazoefficiens (strain JCM 10833 / BCRC 13528 / IAM 13628 / NBRC 14792 / USDA 110), this protein is tRNA pseudouridine synthase B.